The following is a 354-amino-acid chain: UDP-N-acetylglucosamine--N-acetylmuramyl-(pentapeptide) pyrophosphoryl-undecaprenol N-acetylglucosamine transferase (354 aa).

UDP-N-acetyl-alpha-D-glucosamine-binding positions include 15-17 (TGG), Asn-127, Arg-163, Ser-191, Ile-244, 263-268 (ALTVSE), and Gln-288.

This sequence belongs to the glycosyltransferase 28 family. MurG subfamily.

It localises to the cell inner membrane. It carries out the reaction di-trans,octa-cis-undecaprenyl diphospho-N-acetyl-alpha-D-muramoyl-L-alanyl-D-glutamyl-meso-2,6-diaminopimeloyl-D-alanyl-D-alanine + UDP-N-acetyl-alpha-D-glucosamine = di-trans,octa-cis-undecaprenyl diphospho-[N-acetyl-alpha-D-glucosaminyl-(1-&gt;4)]-N-acetyl-alpha-D-muramoyl-L-alanyl-D-glutamyl-meso-2,6-diaminopimeloyl-D-alanyl-D-alanine + UDP + H(+). The protein operates within cell wall biogenesis; peptidoglycan biosynthesis. Functionally, cell wall formation. Catalyzes the transfer of a GlcNAc subunit on undecaprenyl-pyrophosphoryl-MurNAc-pentapeptide (lipid intermediate I) to form undecaprenyl-pyrophosphoryl-MurNAc-(pentapeptide)GlcNAc (lipid intermediate II). The chain is UDP-N-acetylglucosamine--N-acetylmuramyl-(pentapeptide) pyrophosphoryl-undecaprenol N-acetylglucosamine transferase from Vibrio cholerae serotype O1 (strain ATCC 39541 / Classical Ogawa 395 / O395).